A 264-amino-acid chain; its full sequence is Ferric siderophore reductase (264 aa).

In terms of domain architecture, FAD-binding FR-type spans Ser-9 to Asp-127. Arg-73, Ser-74, Thr-76, Asp-90, Val-92, His-96, Ala-100, Thr-101, Lys-247, Asn-249, Thr-250, and Ala-252 together coordinate FAD.

It belongs to the SIP oxidoreductase family. FAD is required as a cofactor.

Its function is as follows. Ferric-siderophore reductase involved in iron removal from the siderophores after their transport into the cell. Catalyzes the reduction of the ferric iron bound to the hydroxamate siderophores produced by Shewanella to ferrous iron. Can use a ferredoxin as electron donor. Despite the clear evidence for the interaction with NAD(P)H, no direct reduction of the enzyme by these compounds is observed, nor consumption of NAD(P)H, suggesting that NADH and NADPH are not the physiological electron donors. The sequence is that of Ferric siderophore reductase from Shewanella frigidimarina (strain NCIMB 400).